The sequence spans 72 residues: Prokaryotic ubiquitin-like protein Pup (72 aa).

The span at 1–10 (MATKDTGGGQ) shows a compositional bias: gly residues. The interval 1–45 (MATKDTGGGQQKATRSTEEVEEQAQDAQASEDLKERQEKLSDDVD) is disordered. A coiled-coil region spans residues 10-60 (QQKATRSTEEVEEQAQDAQASEDLKERQEKLSDDVDSVLDEIDDVLEENAE). Residues 28–66 (QASEDLKERQEKLSDDVDSVLDEIDDVLEENAEDFVRSF) are ARC ATPase binding. Basic and acidic residues predominate over residues 31-42 (EDLKERQEKLSD). Glu72 participates in a covalent cross-link: Isoglutamyl lysine isopeptide (Glu-Lys) (interchain with K-? in acceptor proteins).

Belongs to the prokaryotic ubiquitin-like protein family. Strongly interacts with the proteasome-associated ATPase ARC through a hydrophobic interface; the interacting region of Pup lies in its C-terminal half. There is one Pup binding site per ARC hexamer ring.

It functions in the pathway protein degradation; proteasomal Pup-dependent pathway. In terms of biological role, protein modifier that is covalently attached to lysine residues of substrate proteins, thereby targeting them for proteasomal degradation. The tagging system is termed pupylation. The protein is Prokaryotic ubiquitin-like protein Pup of Streptomyces coelicolor (strain ATCC BAA-471 / A3(2) / M145).